A 373-amino-acid chain; its full sequence is Probable jasmonic acid carboxyl methyltransferase 2 (373 aa).

Y18 is a binding site for S-adenosyl-L-homocysteine. Q25 lines the jasmonate pocket. 6 residues coordinate S-adenosyl-L-homocysteine: C59, N64, D96, L97, S135, and F136. Jasmonate-binding residues include H156 and W157. Mg(2+)-binding residues include N174, D260, F262, and N263.

It belongs to the methyltransferase superfamily. Type-7 methyltransferase family. It depends on Mg(2+) as a cofactor.

The protein localises to the cytoplasm. It is found in the nucleus. It carries out the reaction jasmonate + S-adenosyl-L-methionine = methyl (-)-jasmonate + S-adenosyl-L-homocysteine. Its pathway is lipid metabolism; oxylipin biosynthesis. Catalyzes the methylation of jasmonate into methyljasmonate, a plant volatile that acts as an important cellular regulator mediating diverse developmental processes and defense responses. The sequence is that of Probable jasmonic acid carboxyl methyltransferase 2 from Theobroma cacao (Cacao).